Here is a 581-residue protein sequence, read N- to C-terminus: Arginine--tRNA ligase (581 aa).

The 'HIGH' region motif lies at proline 126–histidine 136.

This sequence belongs to the class-I aminoacyl-tRNA synthetase family. Monomer.

The protein resides in the cytoplasm. The catalysed reaction is tRNA(Arg) + L-arginine + ATP = L-arginyl-tRNA(Arg) + AMP + diphosphate. This chain is Arginine--tRNA ligase, found in Shewanella sp. (strain MR-7).